Here is a 228-residue protein sequence, read N- to C-terminus: LexA repressor (228 aa).

A DNA-binding region (H-T-H motif) is located at residues 26-46; that stretch reads FDEMKDALDLRSKSGIHRLIT. Residues Ser-149 and Lys-187 each act as for autocatalytic cleavage activity in the active site.

This sequence belongs to the peptidase S24 family. Homodimer.

The enzyme catalyses Hydrolysis of Ala-|-Gly bond in repressor LexA.. Represses a number of genes involved in the response to DNA damage (SOS response), including recA and lexA. Has been shown to bind to the direct repeat sequence 5'-GTT-N(7)-GTTC-3'. In the presence of single-stranded DNA, RecA interacts with LexA causing an autocatalytic cleavage which disrupts the DNA-binding part of LexA, leading to derepression of the SOS regulon and eventually DNA repair. The sequence is that of LexA repressor from Cereibacter sphaeroides (strain ATCC 17023 / DSM 158 / JCM 6121 / CCUG 31486 / LMG 2827 / NBRC 12203 / NCIMB 8253 / ATH 2.4.1.) (Rhodobacter sphaeroides).